Consider the following 104-residue polypeptide: Urease subunit beta (104 aa).

This sequence belongs to the urease beta subunit family. As to quaternary structure, heterotrimer of UreA (gamma), UreB (beta) and UreC (alpha) subunits. Three heterotrimers associate to form the active enzyme.

Its subcellular location is the cytoplasm. It carries out the reaction urea + 2 H2O + H(+) = hydrogencarbonate + 2 NH4(+). It participates in nitrogen metabolism; urea degradation; CO(2) and NH(3) from urea (urease route): step 1/1. The protein is Urease subunit beta of Synechococcus sp. (strain RCC307).